The sequence spans 432 residues: Adenylosuccinate synthetase (432 aa).

Residues G12–K18 and G40–T42 contribute to the GTP site. D13 acts as the Proton acceptor in catalysis. Residues D13 and G40 each coordinate Mg(2+). IMP-binding positions include D13 to K16, N38 to H41, T130, R144, Q225, T240, and R304. Residue H41 is the Proton donor of the active site. A300–R306 is a substrate binding site. GTP contacts are provided by residues R306, K332–D334, and S414–G416.

Belongs to the adenylosuccinate synthetase family. Homodimer. Mg(2+) is required as a cofactor.

The protein localises to the cytoplasm. It carries out the reaction IMP + L-aspartate + GTP = N(6)-(1,2-dicarboxyethyl)-AMP + GDP + phosphate + 2 H(+). It functions in the pathway purine metabolism; AMP biosynthesis via de novo pathway; AMP from IMP: step 1/2. In terms of biological role, plays an important role in the de novo pathway of purine nucleotide biosynthesis. Catalyzes the first committed step in the biosynthesis of AMP from IMP. This is Adenylosuccinate synthetase from Anaeromyxobacter dehalogenans (strain 2CP-C).